A 122-amino-acid chain; its full sequence is Small ribosomal subunit protein uS13 (122 aa).

The interval 95–122 (GLPVRGQKTKTNARTRKGPKRTVANKKK) is disordered.

Belongs to the universal ribosomal protein uS13 family. In terms of assembly, part of the 30S ribosomal subunit. Forms a loose heterodimer with protein S19. Forms two bridges to the 50S subunit in the 70S ribosome.

In terms of biological role, located at the top of the head of the 30S subunit, it contacts several helices of the 16S rRNA. In the 70S ribosome it contacts the 23S rRNA (bridge B1a) and protein L5 of the 50S subunit (bridge B1b), connecting the 2 subunits; these bridges are implicated in subunit movement. Contacts the tRNAs in the A and P-sites. The chain is Small ribosomal subunit protein uS13 from Lachnoclostridium phytofermentans (strain ATCC 700394 / DSM 18823 / ISDg) (Clostridium phytofermentans).